A 417-amino-acid polypeptide reads, in one-letter code: NADH-quinone oxidoreductase subunit D (417 aa).

Belongs to the complex I 49 kDa subunit family. In terms of assembly, NDH-1 is composed of 14 different subunits. Subunits NuoB, C, D, E, F, and G constitute the peripheral sector of the complex.

Its subcellular location is the cell inner membrane. The enzyme catalyses a quinone + NADH + 5 H(+)(in) = a quinol + NAD(+) + 4 H(+)(out). Its function is as follows. NDH-1 shuttles electrons from NADH, via FMN and iron-sulfur (Fe-S) centers, to quinones in the respiratory chain. The immediate electron acceptor for the enzyme in this species is believed to be ubiquinone. Couples the redox reaction to proton translocation (for every two electrons transferred, four hydrogen ions are translocated across the cytoplasmic membrane), and thus conserves the redox energy in a proton gradient. The protein is NADH-quinone oxidoreductase subunit D of Legionella pneumophila subsp. pneumophila (strain Philadelphia 1 / ATCC 33152 / DSM 7513).